The following is a 188-amino-acid chain: Pyridoxal 5'-phosphate synthase subunit PdxT (188 aa).

L-glutamine is bound at residue 46–48 (GES). The active-site Nucleophile is C78. L-glutamine is bound by residues R105 and 134 to 135 (IR). Active-site charge relay system residues include H170 and E172.

Belongs to the glutaminase PdxT/SNO family. In terms of assembly, in the presence of PdxS, forms a dodecamer of heterodimers. Only shows activity in the heterodimer.

The enzyme catalyses aldehydo-D-ribose 5-phosphate + D-glyceraldehyde 3-phosphate + L-glutamine = pyridoxal 5'-phosphate + L-glutamate + phosphate + 3 H2O + H(+). It catalyses the reaction L-glutamine + H2O = L-glutamate + NH4(+). It participates in cofactor biosynthesis; pyridoxal 5'-phosphate biosynthesis. Its function is as follows. Catalyzes the hydrolysis of glutamine to glutamate and ammonia as part of the biosynthesis of pyridoxal 5'-phosphate. The resulting ammonia molecule is channeled to the active site of PdxS. The polypeptide is Pyridoxal 5'-phosphate synthase subunit PdxT (Thermotoga maritima (strain ATCC 43589 / DSM 3109 / JCM 10099 / NBRC 100826 / MSB8)).